The following is a 340-amino-acid chain: MYKSLIRPTLFKFDPEEIHYFTFNFLRKFCKIPGATSYLKSKFQVKDARLEREVFGLKFKNPVGLAAGFDKDAKLYNELSSLGFGFIEVGTVTPKPQPGNDKKRLFRLKEDSAIINRMGFNNEGVEATVNRLKSNKNVLIGGNIGKNKATPNEHAVEDYTYSFEALFDYVNYFVVNVSSPNTPNLRELQDKEPLKDLLNTLQKKNEQKKRPKPILLKIAPDLTDEQLMDIIEIVQETKIAGVIATNTTISREGLKSENKNEMGGLSGKPLTKRSTEVIRFLSEKSNKAFPIIGVGGIHTAEDAIEKLEAGASLVQLYTGFIYEGPALIKDINQKILEKGL.

FMN contacts are provided by residues 67-71 and Thr91; that span reads AGFDK. Residue Lys71 coordinates substrate. Residue 116–120 participates in substrate binding; sequence NRMGF. Residues Asn143 and Asn176 each contribute to the FMN site. Asn176 contacts substrate. Ser179 functions as the Nucleophile in the catalytic mechanism. Asn181 serves as a coordination point for substrate. Positions 217 and 245 each coordinate FMN. A substrate-binding site is contributed by 246–247; sequence NT. FMN contacts are provided by residues Gly267, Gly296, and 317 to 318; that span reads YT.

The protein belongs to the dihydroorotate dehydrogenase family. Type 2 subfamily. In terms of assembly, monomer. FMN is required as a cofactor.

The protein resides in the cell membrane. It carries out the reaction (S)-dihydroorotate + a quinone = orotate + a quinol. It functions in the pathway pyrimidine metabolism; UMP biosynthesis via de novo pathway; orotate from (S)-dihydroorotate (quinone route): step 1/1. Its function is as follows. Catalyzes the conversion of dihydroorotate to orotate with quinone as electron acceptor. This Christiangramia forsetii (strain DSM 17595 / CGMCC 1.15422 / KT0803) (Gramella forsetii) protein is Dihydroorotate dehydrogenase (quinone).